The following is a 117-amino-acid chain: Large ribosomal subunit protein bL20 (117 aa).

This sequence belongs to the bacterial ribosomal protein bL20 family.

Its function is as follows. Binds directly to 23S ribosomal RNA and is necessary for the in vitro assembly process of the 50S ribosomal subunit. It is not involved in the protein synthesizing functions of that subunit. The sequence is that of Large ribosomal subunit protein bL20 from Geotalea daltonii (strain DSM 22248 / JCM 15807 / FRC-32) (Geobacter daltonii).